The chain runs to 1888 residues: E3 ubiquitin-protein ligase UPL3 (1888 aa).

The span at Met1 to Glu10 shows a compositional bias: basic and acidic residues. The disordered stretch occupies residues Met1–Ser157. Low complexity predominate over residues Leu41–Ser81. Over residues Asn97–Leu124 the composition is skewed to basic and acidic residues. Over residues Asp137–Asp146 the composition is skewed to acidic residues. 4 ARM repeats span residues Glu227 to Asp267, Pro270 to Gln310, His312 to Lys349, and Leu351 to Glu390. Disordered stretches follow at residues Lys660–Asn711, Ala970–Cys1119, Asp1134–Ala1157, and Arg1280–Gln1307. Over residues Pro986 to Thr1002 the composition is skewed to low complexity. Residues Thr1019–Gly1029 show a composition bias toward basic and acidic residues. Acidic residues predominate over residues Ser1076–Asp1113. 2 stretches are compositionally biased toward low complexity: residues Ala1148–Ala1157 and Ala1286–Ser1303. The segment at Ala1377 to Gly1451 is K-box. Residues Met1490–Ser1888 form the HECT domain. The Glycyl thioester intermediate role is filled by Cys1855.

This sequence belongs to the UPL family. K-HECT subfamily. In terms of tissue distribution, widely expressed.

The catalysed reaction is S-ubiquitinyl-[E2 ubiquitin-conjugating enzyme]-L-cysteine + [acceptor protein]-L-lysine = [E2 ubiquitin-conjugating enzyme]-L-cysteine + N(6)-ubiquitinyl-[acceptor protein]-L-lysine.. The protein operates within protein modification; protein ubiquitination. Probable E3 ubiquitin-protein ligase which mediates ubiquitination and subsequent proteasomal degradation of target proteins. Involved in the repression of endoreduplication process and the cell morphogenesis in the trichomes. This chain is E3 ubiquitin-protein ligase UPL3 (UPL3), found in Arabidopsis thaliana (Mouse-ear cress).